A 487-amino-acid polypeptide reads, in one-letter code: Chromosomal replication initiator protein DnaA (487 aa).

The segment at 1 to 79 is domain I, interacts with DnaA modulators; sequence MPNSMWHQCL…QAPRVMMKVG (79 aa). Residues 78-138 are disordered; sequence VGSAPKPTDP…PAPKAQAERR (61 aa). Positions 79 to 150 are domain II; the sequence is GSAPKPTDPV…QVEGDIKHQS (72 aa). The interval 151-367 is domain III, AAA+ region; sequence FLNETFTFDT…GALRLVIANA (217 aa). Residues Gly-195, Gly-197, Lys-198, and Thr-199 each coordinate ATP. Residues 368–487 form a domain IV, binds dsDNA region; it reads HFTGSEITPP…YQNFMRLLTT (120 aa).

This sequence belongs to the DnaA family. Oligomerizes as a right-handed, spiral filament on DNA at oriC.

It is found in the cytoplasm. Functionally, plays an essential role in the initiation and regulation of chromosomal replication. ATP-DnaA binds to the origin of replication (oriC) to initiate formation of the DNA replication initiation complex once per cell cycle. Binds the DnaA box (a 9 base pair repeat at the origin) and separates the double-stranded (ds)DNA. Forms a right-handed helical filament on oriC DNA; dsDNA binds to the exterior of the filament while single-stranded (ss)DNA is stabiized in the filament's interior. The ATP-DnaA-oriC complex binds and stabilizes one strand of the AT-rich DNA unwinding element (DUE), permitting loading of DNA polymerase. After initiation quickly degrades to an ADP-DnaA complex that is not apt for DNA replication. Binds acidic phospholipids. The protein is Chromosomal replication initiator protein DnaA of Marinobacter nauticus (strain ATCC 700491 / DSM 11845 / VT8) (Marinobacter aquaeolei).